The following is a 361-amino-acid chain: Septin-1 (361 aa).

In terms of domain architecture, Septin-type G spans 32-304 (KGFEFTLMVV…ENYRSDRLAK (273 aa)). Residues 42-49 (GESGLGKS) form a G1 motif region. Residues 42-49 (GESGLGKS), threonine 76, glycine 102, 181-189 (KADCLTKKE), glycine 239, and arginine 254 each bind GTP. The tract at residues 99-102 (DTPG) is G3 motif. A G4 motif region spans residues 180-183 (AKAD). Residue serine 319 is modified to Phosphoserine.

It belongs to the TRAFAC class TrmE-Era-EngA-EngB-Septin-like GTPase superfamily. Septin GTPase family. In terms of assembly, likely part of a multicomponent septin complex that includes pnut. Interacts with pnut. Interacts with park. Post-translationally, ubiquitinated by park, leading to its degradation by the proteasome. Accumulates at the leading edge of the cleavage furrow in dividing cells and cellularizing embryos (at protein level). Also accumulates at the leading edge of the embryo epithelium during dorsal closure, in the embryonic neurons, and at the baso-lateral surfaces of ovarian follicle cells (at protein level).

The protein resides in the cytoplasm. In terms of biological role, involved in cytokinesis. May be involved in p53-dependent apoptosis. This chain is Septin-1, found in Drosophila melanogaster (Fruit fly).